We begin with the raw amino-acid sequence, 306 residues long: Protease HtpX homolog (306 aa).

2 consecutive transmembrane segments (helical) span residues 10–30 (TTLL…ATGG) and 33–53 (QTLS…YWFS). His-135 lines the Zn(2+) pocket. Glu-136 is an active-site residue. His-139 contacts Zn(2+). 2 helical membrane passes run 149–169 (AIAS…MYFG) and 181–201 (GLGL…ASLI). Residue Glu-210 coordinates Zn(2+).

This sequence belongs to the peptidase M48B family. It depends on Zn(2+) as a cofactor.

It localises to the cell membrane. In Bifidobacterium longum (strain NCC 2705), this protein is Protease HtpX homolog.